The primary structure comprises 428 residues: Trigger factor (428 aa).

Positions 163–248 (GDTAVIDFEG…VHEIKEKRLP (86 aa)) constitute a PPIase FKBP-type domain.

The protein belongs to the FKBP-type PPIase family. Tig subfamily.

It localises to the cytoplasm. The enzyme catalyses [protein]-peptidylproline (omega=180) = [protein]-peptidylproline (omega=0). Involved in protein export. Acts as a chaperone by maintaining the newly synthesized protein in an open conformation. Functions as a peptidyl-prolyl cis-trans isomerase. This chain is Trigger factor, found in Geobacillus sp. (strain WCH70).